A 461-amino-acid polypeptide reads, in one-letter code: Photosystem II CP43 reaction center protein (461 aa).

The propeptide occupies 1 to 2; it reads ME. An N-acetylthreonine modification is found at Thr3. Phosphothreonine is present on Thr3. A run of 5 helical transmembrane segments spans residues 57–81, 122–143, 166–188, 243–263, and 279–300; these read LFEVAHFVPEKPMYEQGLILLPHLA, LLGPETLEESFPFFGYVWKDRN, KALYFGGVYDTWAPGGGDVRKIS, KPFAWARRALVWSGEAYLSYS, and WFNNTAYPSEFYGPTGPEASQA. Glu355 is a [CaMn4O5] cluster binding site. A helical membrane pass occupies residues 435–459; that stretch reads RARAAAAGFEKGIDRDFEPVLSMTP.

This sequence belongs to the PsbB/PsbC family. PsbC subfamily. In terms of assembly, PSII is composed of 1 copy each of membrane proteins PsbA, PsbB, PsbC, PsbD, PsbE, PsbF, PsbH, PsbI, PsbJ, PsbK, PsbL, PsbM, PsbT, PsbX, PsbY, PsbZ, Psb30/Ycf12, at least 3 peripheral proteins of the oxygen-evolving complex and a large number of cofactors. It forms dimeric complexes. Binds multiple chlorophylls and provides some of the ligands for the Ca-4Mn-5O cluster of the oxygen-evolving complex. It may also provide a ligand for a Cl- that is required for oxygen evolution. PSII binds additional chlorophylls, carotenoids and specific lipids. is required as a cofactor.

The protein resides in the plastid. The protein localises to the chloroplast thylakoid membrane. Functionally, one of the components of the core complex of photosystem II (PSII). It binds chlorophyll and helps catalyze the primary light-induced photochemical processes of PSII. PSII is a light-driven water:plastoquinone oxidoreductase, using light energy to abstract electrons from H(2)O, generating O(2) and a proton gradient subsequently used for ATP formation. The protein is Photosystem II CP43 reaction center protein of Trachelium caeruleum (Blue throatwort).